Here is a 294-residue protein sequence, read N- to C-terminus: Shikimate kinase (294 aa).

87–97 provides a ligand contact to ATP; it reads PLAGGLKSSSA.

This sequence belongs to the GHMP kinase family. Archaeal shikimate kinase subfamily.

It localises to the cytoplasm. It catalyses the reaction shikimate + ATP = 3-phosphoshikimate + ADP + H(+). It functions in the pathway metabolic intermediate biosynthesis; chorismate biosynthesis; chorismate from D-erythrose 4-phosphate and phosphoenolpyruvate: step 5/7. This is Shikimate kinase (aroK) from Methanosarcina acetivorans (strain ATCC 35395 / DSM 2834 / JCM 12185 / C2A).